Reading from the N-terminus, the 276-residue chain is Diaminopimelate epimerase (276 aa).

The substrate site is built by asparagine 13, glutamine 46, and asparagine 66. Cysteine 75 functions as the Proton donor in the catalytic mechanism. Residues 76–77 (GN), asparagine 159, asparagine 192, and 210–211 (ER) each bind substrate. Catalysis depends on cysteine 219, which acts as the Proton acceptor. Position 220–221 (220–221 (GT)) interacts with substrate.

It belongs to the diaminopimelate epimerase family. Homodimer.

The protein resides in the cytoplasm. It carries out the reaction (2S,6S)-2,6-diaminopimelate = meso-2,6-diaminopimelate. The protein operates within amino-acid biosynthesis; L-lysine biosynthesis via DAP pathway; DL-2,6-diaminopimelate from LL-2,6-diaminopimelate: step 1/1. Functionally, catalyzes the stereoinversion of LL-2,6-diaminopimelate (L,L-DAP) to meso-diaminopimelate (meso-DAP), a precursor of L-lysine and an essential component of the bacterial peptidoglycan. This chain is Diaminopimelate epimerase, found in Pseudomonas fluorescens (strain Pf0-1).